Consider the following 400-residue polypeptide: Acetate kinase (400 aa).

Mg(2+) is bound at residue asparagine 9. Lysine 16 is an ATP binding site. Substrate is bound at residue arginine 90. Aspartate 147 serves as the catalytic Proton donor/acceptor. Residues histidine 207–glycine 211, aspartate 282–arginine 284, and glycine 330–asparagine 334 each bind ATP. Residue glutamate 385 coordinates Mg(2+).

Belongs to the acetokinase family. In terms of assembly, homodimer. Requires Mg(2+) as cofactor. Mn(2+) serves as cofactor.

It is found in the cytoplasm. The catalysed reaction is acetate + ATP = acetyl phosphate + ADP. Its pathway is metabolic intermediate biosynthesis; acetyl-CoA biosynthesis; acetyl-CoA from acetate: step 1/2. In terms of biological role, catalyzes the formation of acetyl phosphate from acetate and ATP. Can also catalyze the reverse reaction. The polypeptide is Acetate kinase (Staphylococcus aureus (strain Mu3 / ATCC 700698)).